Reading from the N-terminus, the 597-residue chain is Arginine--tRNA ligase (597 aa).

The short motif at 137–147 (PNIAKEMHVGH) is the 'HIGH' region element.

Belongs to the class-I aminoacyl-tRNA synthetase family. In terms of assembly, monomer.

It localises to the cytoplasm. The enzyme catalyses tRNA(Arg) + L-arginine + ATP = L-arginyl-tRNA(Arg) + AMP + diphosphate. The protein is Arginine--tRNA ligase of Parasynechococcus marenigrum (strain WH8102).